The following is a 238-amino-acid chain: MIINAKGPASFAEKYIVRSIWDNKFPPGSILPAERELSELIGVTRTTLREVLQRLARDGWLKIQHGKPTRVNNFWETSGLNILETIADLNPEGFPVLVDQLLSARTNVSAIYFRGALRYNPDTAVDVLAKIHQLEDTAESYAEFDYLLHHTLAFSSGNPLYVLILNGFKGLYSRVGRYYFTSSDARLLALNFYKELELLAQVKNYLDVPALMRTYGMNSGKMWLQLRDDMPASIAQDN.

The 69-residue stretch at 6 to 74 (KGPASFAEKY…HGKPTRVNNF (69 aa)) folds into the HTH gntR-type domain. Positions 34 to 53 (ERELSELIGVTRTTLREVLQ) form a DNA-binding region, H-T-H motif.

In terms of assembly, homodimer.

Its subcellular location is the cytoplasm. In terms of biological role, multifunctional regulator of fatty acid metabolism. The chain is Fatty acid metabolism regulator protein from Shewanella baltica (strain OS223).